Consider the following 174-residue polypeptide: Protein C2-DOMAIN ABA-RELATED 6 (174 aa).

Residues 1–115 enclose the C2 domain; sequence MEKTEEEVEM…HKLGLKELPH (115 aa). Positions 30, 31, 36, 82, 83, 84, and 90 each coordinate Ca(2+).

The protein belongs to the plant CAR protein family. Binds to PYR/PYL/RCAR abscisic acid intracellular receptors in an ABA-independent manner, both at the plasma membrane and in the nucleus. Subunit of a complex made of CAR6, PHOT1 and RPT3/NPH3. Interacts directly with RPT3/NPH3.

The protein resides in the cell membrane. The protein localises to the nucleus. Its function is as follows. Stimulates the GTPase/ATPase activities of Obg-like ATPases. Mediates the transient calcium-dependent interaction of PYR/PYL/RCAR abscisic acid (ABA) receptors with the plasma membrane and thus regulates ABA sensitivity. Prevents hypocotyl bending as well as gravitropic response under blue light conditions. This Arabidopsis thaliana (Mouse-ear cress) protein is Protein C2-DOMAIN ABA-RELATED 6.